A 670-amino-acid polypeptide reads, in one-letter code: Methionine--tRNA ligase (670 aa).

A 'HIGH' region motif is present at residues Pro-14–His-24. Zn(2+) contacts are provided by Cys-145, Cys-148, Cys-158, and Cys-161. The 'KMSKS' region signature appears at Lys-330–Ser-334. Lys-333 contributes to the ATP binding site. One can recognise a tRNA-binding domain in the interval Asp-570 to Lys-670.

This sequence belongs to the class-I aminoacyl-tRNA synthetase family. MetG type 1 subfamily. Homodimer. Requires Zn(2+) as cofactor.

The protein localises to the cytoplasm. The catalysed reaction is tRNA(Met) + L-methionine + ATP = L-methionyl-tRNA(Met) + AMP + diphosphate. Its function is as follows. Is required not only for elongation of protein synthesis but also for the initiation of all mRNA translation through initiator tRNA(fMet) aminoacylation. The polypeptide is Methionine--tRNA ligase (Legionella pneumophila (strain Paris)).